The primary structure comprises 178 residues: uncharacterized protein (178 aa).

It localises to the mitochondrion. This is an uncharacterized protein from Paramecium tetraurelia.